The sequence spans 687 residues: Polyphosphate kinase (687 aa).

Residue asparagine 45 participates in ATP binding. The Mg(2+) site is built by arginine 373 and arginine 403. Catalysis depends on histidine 433, which acts as the Phosphohistidine intermediate. Tyrosine 466, arginine 562, and histidine 590 together coordinate ATP. The PLD phosphodiesterase domain occupies 585-615 (DRFLEHDRVYVFENKGDKLVYLSSADWMTRN).

This sequence belongs to the polyphosphate kinase 1 (PPK1) family. Mg(2+) serves as cofactor. An intermediate of this reaction is the autophosphorylated ppk in which a phosphate is covalently linked to a histidine residue through a N-P bond.

The enzyme catalyses [phosphate](n) + ATP = [phosphate](n+1) + ADP. Catalyzes the reversible transfer of the terminal phosphate of ATP to form a long-chain polyphosphate (polyP). The protein is Polyphosphate kinase of Yersinia pestis.